Consider the following 609-residue polypeptide: Membrane-bound O-acyltransferase GUP2 (609 aa).

An N-terminal signal peptide occupies residues 1 to 18 (MSMLRIWSCIVHFFSVQA). Over 19-75 (LDSRIKPDIEFKRRQRIFINSSKEENGSSSSAVTVTRNPVLSSNSPSPPLWNTWEFR) the chain is Lumenal. Residues 76-96 (LYYLAFTVVVPFMIKAALATS) form a helical membrane-spanning segment. The Cytoplasmic portion of the chain corresponds to 97–133 (SESNPNYYKFSGLLAHGWILGRKVDNSDPQYRFFRSN). Residues 134 to 154 (FFLLAILILLQIILKKVFVKF) form a helical membrane-spanning segment. At 155 to 169 (SKIPKTKFDFACGLV) the chain is on the lumenal side. The helical transmembrane segment at 170–190 (FVCFMYGINSVKLFTHAFIFF) threads the bilayer. Over 191-200 (TLAHSLKRKR) the chain is Cytoplasmic. A helical transmembrane segment spans residues 201–221 (LIAAFAIWSYGIFTLFINQKM). The Lumenal portion of the chain corresponds to 222-324 (KNLPFNNIAI…VAEHHIQDYN (103 aa)). Residues 325–345 (FINFIAYITYAPLFLVGPIIT) traverse the membrane as a helical segment. Over 346–371 (FNDYLYQSENKLPSLTKKNIGFYALK) the chain is Cytoplasmic. A helical membrane pass occupies residues 372-392 (VFSSLLLMEIILHYIYVGAIA). The Lumenal segment spans residues 393–406 (RTKAWNNDTPLQQA). Residues 407–427 (MIALFNLNIMYLKLLIPWRLF) form a helical membrane-spanning segment. Residues 428-474 (RLWAMVDGIDAPENMLRCVDNNYSTVGFWRAWHTSFNKWVIRYIYVP) lie on the Cytoplasmic side of the membrane. Residues 475-495 (FGGSNNKILTSFAVFSFVAIW) form a helical membrane-spanning segment. Residue His496 is part of the active site. Residues 496-502 (HDIQLRV) are Lumenal-facing. The chain crosses the membrane as a helical span at residues 503-523 (LFWGWLTVLLLLGETYITNCF). The Cytoplasmic segment spans residues 524 to 533 (SRYRFRSWYR). The chain crosses the membrane as a helical span at residues 534 to 554 (FVCGIGAAINICMMMIINVYG). Topologically, residues 555–575 (FCLGAEGTKLLLKGIFNNSHS) are lumenal. The chain crosses the membrane as a helical span at residues 576–596 (PEFLTAVMVSLFIAVQVMFEI). The Cytoplasmic segment spans residues 597 to 609 (REEEKRHGINLKC).

Belongs to the membrane-bound acyltransferase family.

The protein resides in the endoplasmic reticulum membrane. In terms of biological role, probable membrane-bound O-acyltransferase. Together with GUP1, has an influence on the chemical composition of the yeast extracellular matrix (yECM) in yeast multicellular aggregates, such as biofilms and colonies. The protein is Membrane-bound O-acyltransferase GUP2 (GUP2) of Saccharomyces cerevisiae (strain ATCC 204508 / S288c) (Baker's yeast).